The following is a 167-amino-acid chain: NADH-ubiquinone oxidoreductase chain 6 (167 aa).

4 helical membrane passes run 5–25 (IIMLSKIFMSSLISMILTIYL), 34–54 (MLLIYLISYSIYMSLMMFTMC), 60–80 (LILMILIVFLSGMLIMFSYFI), and 138–158 (FFIMILMLIITLILMTKITYI).

Belongs to the complex I subunit 6 family.

The protein resides in the mitochondrion membrane. The enzyme catalyses a ubiquinone + NADH + 5 H(+)(in) = a ubiquinol + NAD(+) + 4 H(+)(out). Core subunit of the mitochondrial membrane respiratory chain NADH dehydrogenase (Complex I) that is believed to belong to the minimal assembly required for catalysis. Complex I functions in the transfer of electrons from NADH to the respiratory chain. The immediate electron acceptor for the enzyme is believed to be ubiquinone. This Apis mellifera ligustica (Common honeybee) protein is NADH-ubiquinone oxidoreductase chain 6 (ND6).